A 187-amino-acid polypeptide reads, in one-letter code: ATP synthase subunit b 2 (187 aa).

The chain crosses the membrane as a helical span at residues 39–61; that stretch reads SQLVWLVLSFAALYLLMSRVALP.

The protein belongs to the ATPase B chain family. As to quaternary structure, F-type ATPases have 2 components, F(1) - the catalytic core - and F(0) - the membrane proton channel. F(1) has five subunits: alpha(3), beta(3), gamma(1), delta(1), epsilon(1). F(0) has three main subunits: a(1), b(2) and c(10-14). The alpha and beta chains form an alternating ring which encloses part of the gamma chain. F(1) is attached to F(0) by a central stalk formed by the gamma and epsilon chains, while a peripheral stalk is formed by the delta and b chains.

The protein resides in the cell inner membrane. Its function is as follows. F(1)F(0) ATP synthase produces ATP from ADP in the presence of a proton or sodium gradient. F-type ATPases consist of two structural domains, F(1) containing the extramembraneous catalytic core and F(0) containing the membrane proton channel, linked together by a central stalk and a peripheral stalk. During catalysis, ATP synthesis in the catalytic domain of F(1) is coupled via a rotary mechanism of the central stalk subunits to proton translocation. Functionally, component of the F(0) channel, it forms part of the peripheral stalk, linking F(1) to F(0). This Parvibaculum lavamentivorans (strain DS-1 / DSM 13023 / NCIMB 13966) protein is ATP synthase subunit b 2.